A 780-amino-acid polypeptide reads, in one-letter code: Endonuclease MutS2 (780 aa).

ATP is bound at residue 334 to 341 (GPNAGGKT). A Smr domain is found at 706–780 (IDIRGMRSVD…GGSGKTIVEI (75 aa)).

This sequence belongs to the DNA mismatch repair MutS family. MutS2 subfamily. As to quaternary structure, homodimer. Binds to stalled ribosomes, contacting rRNA.

Its function is as follows. Endonuclease that is involved in the suppression of homologous recombination and thus may have a key role in the control of bacterial genetic diversity. Functionally, acts as a ribosome collision sensor, splitting the ribosome into its 2 subunits. Detects stalled/collided 70S ribosomes which it binds and splits by an ATP-hydrolysis driven conformational change. Acts upstream of the ribosome quality control system (RQC), a ribosome-associated complex that mediates the extraction of incompletely synthesized nascent chains from stalled ribosomes and their subsequent degradation. Probably generates substrates for RQC. This chain is Endonuclease MutS2, found in Borreliella burgdorferi (strain ATCC 35210 / DSM 4680 / CIP 102532 / B31) (Borrelia burgdorferi).